We begin with the raw amino-acid sequence, 164 residues long: FMN reductase (NADH) RutF (164 aa).

This sequence belongs to the non-flavoprotein flavin reductase family. RutF subfamily.

The enzyme catalyses FMNH2 + NAD(+) = FMN + NADH + 2 H(+). Functionally, catalyzes the reduction of FMN to FMNH2 which is used to reduce pyrimidine by RutA via the Rut pathway. This Escherichia coli O45:K1 (strain S88 / ExPEC) protein is FMN reductase (NADH) RutF.